The chain runs to 241 residues: Uridylate kinase (241 aa).

Position 15-18 (15-18) interacts with ATP; it reads KMSG. Positions 23 to 28 are involved in allosteric activation by GTP; it reads GAEGFG. Residue glycine 57 coordinates UMP. Residues glycine 58 and arginine 62 each coordinate ATP. UMP is bound by residues aspartate 77 and 138–145; that span reads TGNPLFTT. Positions 165, 171, and 174 each coordinate ATP.

The protein belongs to the UMP kinase family. In terms of assembly, homohexamer.

The protein localises to the cytoplasm. The catalysed reaction is UMP + ATP = UDP + ADP. Its pathway is pyrimidine metabolism; CTP biosynthesis via de novo pathway; UDP from UMP (UMPK route): step 1/1. Allosterically activated by GTP. Inhibited by UTP. Catalyzes the reversible phosphorylation of UMP to UDP. This is Uridylate kinase from Blochmanniella pennsylvanica (strain BPEN).